A 71-amino-acid chain; its full sequence is Long neurotoxin 1 (71 aa).

5 disulfide bridges follow: Cys3-Cys21, Cys14-Cys42, Cys27-Cys31, Cys46-Cys57, and Cys58-Cys63.

The protein belongs to the three-finger toxin family. Long-chain subfamily. Type II alpha-neurotoxin sub-subfamily. As to expression, expressed by the venom gland.

It is found in the secreted. Its function is as follows. Binds with high affinity to muscular (alpha-1/CHRNA1) and neuronal (alpha-7/CHRNA7) nicotinic acetylcholine receptor (nAChR) and inhibits acetylcholine from binding to the receptor, thereby impairing neuromuscular and neuronal transmission. This is Long neurotoxin 1 from Naja melanoleuca (Forest cobra).